We begin with the raw amino-acid sequence, 394 residues long: S-adenosylmethionine synthase (394 aa).

H16 provides a ligand contact to ATP. D18 provides a ligand contact to Mg(2+). E44 provides a ligand contact to K(+). Residues E57 and Q100 each contribute to the L-methionine site. Positions 100–110 are flexible loop; it reads QSPDIAQGVDA. Residues 172–174, 239–240, D248, 254–255, A271, and K275 contribute to the ATP site; these read DAK, RF, and RK. Position 248 (D248) interacts with L-methionine. L-methionine is bound at residue K279.

It belongs to the AdoMet synthase family. As to quaternary structure, homotetramer; dimer of dimers. The cofactor is Mg(2+). Requires K(+) as cofactor.

The protein localises to the cytoplasm. The catalysed reaction is L-methionine + ATP + H2O = S-adenosyl-L-methionine + phosphate + diphosphate. Its pathway is amino-acid biosynthesis; S-adenosyl-L-methionine biosynthesis; S-adenosyl-L-methionine from L-methionine: step 1/1. Catalyzes the formation of S-adenosylmethionine (AdoMet) from methionine and ATP. The overall synthetic reaction is composed of two sequential steps, AdoMet formation and the subsequent tripolyphosphate hydrolysis which occurs prior to release of AdoMet from the enzyme. The chain is S-adenosylmethionine synthase from Enterococcus faecalis (strain ATCC 700802 / V583).